Reading from the N-terminus, the 147-residue chain is 2-amino-4-hydroxy-6-hydroxymethyldihydropteridine pyrophosphokinase (147 aa).

The protein belongs to the HPPK family.

It carries out the reaction 6-hydroxymethyl-7,8-dihydropterin + ATP = (7,8-dihydropterin-6-yl)methyl diphosphate + AMP + H(+). Its pathway is cofactor biosynthesis; tetrahydrofolate biosynthesis; 2-amino-4-hydroxy-6-hydroxymethyl-7,8-dihydropteridine diphosphate from 7,8-dihydroneopterin triphosphate: step 4/4. In terms of biological role, catalyzes the transfer of pyrophosphate from adenosine triphosphate (ATP) to 6-hydroxymethyl-7,8-dihydropterin, an enzymatic step in folate biosynthesis pathway. This chain is 2-amino-4-hydroxy-6-hydroxymethyldihydropteridine pyrophosphokinase (folK), found in Porphyromonas gingivalis (strain ATCC 33277 / DSM 20709 / CIP 103683 / JCM 12257 / NCTC 11834 / 2561).